Here is a 158-residue protein sequence, read N- to C-terminus: Rhombotin-2 (158 aa).

2 LIM zinc-binding domains span residues cysteine 30–glycine 89 and cysteine 94–lysine 153.

As to quaternary structure, interacts via its LIM domains with ELF2 and LDB1. Interacts with BEX2 and KDM5A. Also interacts with basic helix-loop-helix protein TAL1/SCL and can assemble in a complex with LMO2 and TAL1/SCL.

Its subcellular location is the nucleus. Functionally, acts with TAL1/SCL to regulate red blood cell development. Also acts with LDB1 to maintain erythroid precursors in an immature state. This chain is Rhombotin-2 (LMO2), found in Bos taurus (Bovine).